The following is a 553-amino-acid chain: Sulfatase (553 aa).

The first 25 residues, 1 to 25, serve as a signal peptide directing secretion; the sequence is MTSEMKKFSKIVLFGLLISPLLASS. Aspartate 43, aspartate 44, and cysteine 88 together coordinate Ca(2+). Residue cysteine 88 is the Nucleophile of the active site. Cysteine 88 bears the 3-oxoalanine (Cys) mark. Histidine 159 is a catalytic residue. Positions 350 and 351 each coordinate Ca(2+).

The protein belongs to the sulfatase family. It depends on Ca(2+) as a cofactor. In terms of processing, the conversion to 3-oxoalanine (also known as C-formylglycine, FGly), of a serine or cysteine residue in prokaryotes and of a cysteine residue in eukaryotes, is critical for catalytic activity. This post-translational modification is severely defective in multiple sulfatase deficiency (MSD).

The protein localises to the secreted. Functionally, sulfatase that may be involved in ulvan degradation. Ulvan is the main polysaccharide component of the Ulvales (green seaweed) cell wall. It is composed of disaccharide building blocks comprising 3-sulfated rhamnose (Rha3S) linked to D-glucuronic acid (GlcA), L-iduronic acid (IduA), or D-xylose (Xyl). This is Sulfatase from Formosa agariphila (strain DSM 15362 / KCTC 12365 / LMG 23005 / KMM 3901 / M-2Alg 35-1).